The primary structure comprises 571 residues: MFAVSIVPRTTSCRLSSAFLCQLSIPLTLRLHHHYQHHQPHLPSPLSFQIHSLRKQIDMAAQGGDSYEEALAALSSLITKRSRADKSNKGDRFELVFDYLKLLDLEEDILKMNVIHVAGTKGKGSTCTFTESIIRNYGFRTGLFTSPHLIDVRERFRLDGVDISEEKFLGYFWWCYNRLKERTNEEIPMPTYFRFLALLAFKIFAAEEVDAAILEVGLGGKFDATNAVQKPVVCGISSLGYDHMEILGDTLGKIAGEKAGIFKLGVPAFTVPQPDEAMRVLEEKASETEVNLEVVQPLTARLLSGQKLGLDGEHQYVNAGLAVSLASIWLQQIGKLEVPSRTQMSILPEKFIKGLATASLQGRAQVVPDQYTESRTSGDLVFYLDGAHSPESMEACAKWFSVAVKGDNQSGSSGHLVNGSAGSSHDKWSNETCEQILLFNCMSVRDPNLLLPHLKNMCAKYGVNFKKALFVPNMSVYHKVGTAADLPENDPQVDLSWQFTLQKVWESLVQSERDGEKDGESDGNSEVFTSLPMAIKCLRDTVHESSSATRFQVLVTGSLHLVGDVLRLIRK.

ATP is bound at residue 122 to 125 (GKGS). Serine 146, glutamate 215, and histidine 243 together coordinate Mg(2+). Positions 363 and 385 each coordinate ATP.

Belongs to the folylpolyglutamate synthase family. The cofactor is a monovalent cation. In terms of tissue distribution, expressed in both shoots and roots, but expression in roots is higher compared with shoots. Distinct expression in the quiescent center (QC) region of the root tip. Also expressed in vascular tissues of the cotyledons and hypocotyls, and the first true leaves of 7 days old seedlings.

The protein localises to the plastid. It localises to the chloroplast. The enzyme catalyses (6S)-5,6,7,8-tetrahydrofolyl-(gamma-L-Glu)(n) + L-glutamate + ATP = (6S)-5,6,7,8-tetrahydrofolyl-(gamma-L-Glu)(n+1) + ADP + phosphate + H(+). Its pathway is cofactor biosynthesis; tetrahydrofolylpolyglutamate biosynthesis. Functionally, catalyzes conversion of folates to polyglutamate derivatives allowing concentration of folate compounds in the cell and the intracellular retention of these cofactors, which are important substrates for most of the folate-dependent enzymes that are involved in one-carbon transfer reactions involved in purine, pyrimidine and amino acid synthesis. Essential for organellar and whole-plant folate homeostasis. Required for postembryonic root development. Generates polyglutamylated folate cofactors to support C1 metabolism required for meristem maintenance and cell expansion during postembryonic root development. In Arabidopsis thaliana (Mouse-ear cress), this protein is Folylpolyglutamate synthase.